The chain runs to 201 residues: Small ribosomal subunit protein uS4 (201 aa).

The disordered stretch occupies residues 1-42; sequence MARYTGPVTRKSRRLGTDLVGGDQSFEKRPYPPGQHGRARIK. One can recognise an S4 RNA-binding domain in the interval 91-157; it reads SRLDNVVYRA…VPFQIARETA (67 aa).

It belongs to the universal ribosomal protein uS4 family. As to quaternary structure, part of the 30S ribosomal subunit. Contacts protein S5. The interaction surface between S4 and S5 is involved in control of translational fidelity.

Its function is as follows. One of the primary rRNA binding proteins, it binds directly to 16S rRNA where it nucleates assembly of the body of the 30S subunit. In terms of biological role, with S5 and S12 plays an important role in translational accuracy. In Mycobacterium marinum (strain ATCC BAA-535 / M), this protein is Small ribosomal subunit protein uS4.